The primary structure comprises 138 residues: Nucleoside diphosphate kinase (138 aa).

ATP-binding residues include K9, F57, R85, T91, R102, and N112. H115 acts as the Pros-phosphohistidine intermediate in catalysis.

This sequence belongs to the NDK family. In terms of assembly, homotetramer. The cofactor is Mg(2+).

The protein resides in the cytoplasm. The catalysed reaction is a 2'-deoxyribonucleoside 5'-diphosphate + ATP = a 2'-deoxyribonucleoside 5'-triphosphate + ADP. The enzyme catalyses a ribonucleoside 5'-diphosphate + ATP = a ribonucleoside 5'-triphosphate + ADP. Its function is as follows. Major role in the synthesis of nucleoside triphosphates other than ATP. The ATP gamma phosphate is transferred to the NDP beta phosphate via a ping-pong mechanism, using a phosphorylated active-site intermediate. The sequence is that of Nucleoside diphosphate kinase from Deinococcus radiodurans (strain ATCC 13939 / DSM 20539 / JCM 16871 / CCUG 27074 / LMG 4051 / NBRC 15346 / NCIMB 9279 / VKM B-1422 / R1).